The primary structure comprises 178 residues: MAEAITIARPYAEAVFRLAQGSGSLSLWSEMLGIVSSVIQESQVNALIGNPQIPSIKLREIVFSICDKELNEDGRRLISLLIENGRLLVLPQISELYEQLKAQHESVLEAEIVSAFPLESYQLEKLISVLEVKFQHKVKAQVSVDSGLIGGVKIEIGDQVIDSSVSGKLEAMAATLKS.

The protein belongs to the ATPase delta chain family. F-type ATPases have 2 components, F(1) - the catalytic core - and F(0) - the membrane proton channel. F(1) has five subunits: alpha(3), beta(3), gamma(1), delta(1), epsilon(1). F(0) has three main subunits: a(1), b(2) and c(10-14). The alpha and beta chains form an alternating ring which encloses part of the gamma chain. F(1) is attached to F(0) by a central stalk formed by the gamma and epsilon chains, while a peripheral stalk is formed by the delta and b chains.

The protein localises to the cell inner membrane. Its function is as follows. F(1)F(0) ATP synthase produces ATP from ADP in the presence of a proton or sodium gradient. F-type ATPases consist of two structural domains, F(1) containing the extramembraneous catalytic core and F(0) containing the membrane proton channel, linked together by a central stalk and a peripheral stalk. During catalysis, ATP synthesis in the catalytic domain of F(1) is coupled via a rotary mechanism of the central stalk subunits to proton translocation. This protein is part of the stalk that links CF(0) to CF(1). It either transmits conformational changes from CF(0) to CF(1) or is implicated in proton conduction. The sequence is that of ATP synthase subunit delta from Nitrosomonas eutropha (strain DSM 101675 / C91 / Nm57).